Consider the following 91-residue polypeptide: Large ribosomal subunit protein uL23c (91 aa).

This sequence belongs to the universal ribosomal protein uL23 family. Part of the 50S ribosomal subunit.

The protein resides in the plastid. It localises to the chloroplast. Functionally, binds to 23S rRNA. The protein is Large ribosomal subunit protein uL23c (rpl23) of Marchantia polymorpha (Common liverwort).